The chain runs to 1168 residues: Transcription-repair-coupling factor (1168 aa).

Residues 633–794 (DMQKSRPMDR…MLGVRDLSVI (162 aa)) form the Helicase ATP-binding domain. Residue 646-653 (GDVGYGKT) participates in ATP binding. The DEEQ box motif lies at 747-750 (DEEQ). A Helicase C-terminal domain is found at 808–969 (VLEQNMSFIK…GFKIAMRDLN (162 aa)).

The protein in the N-terminal section; belongs to the UvrB family. This sequence in the C-terminal section; belongs to the helicase family. RecG subfamily.

The protein localises to the cytoplasm. In terms of biological role, couples transcription and DNA repair by recognizing RNA polymerase (RNAP) stalled at DNA lesions. Mediates ATP-dependent release of RNAP and its truncated transcript from the DNA, and recruitment of nucleotide excision repair machinery to the damaged site. The chain is Transcription-repair-coupling factor from Staphylococcus aureus (strain MRSA252).